A 485-amino-acid chain; its full sequence is Ribosomal protein S6 kinase beta-2 (485 aa).

A disordered region spans residues 1–26 (MAAVFDLDLETEEGSEGEGEPEFSPA). Over residues 7–21 (LDLETEEGSEGEGEP) the composition is skewed to acidic residues. At S15 the chain carries Phosphoserine. Positions 67–328 (FELLSVLGKG…AADVQRHPFF (262 aa)) constitute a Protein kinase domain. ATP is bound by residues 73-81 (LGKGGYGKV) and K99. D194 acts as the Proton acceptor in catalysis. The 71-residue stretch at 329-399 (RHINWDDLLA…VAPSVLDSIK (71 aa)) folds into the AGC-kinase C-terminal domain. Residues 407–485 (KLRSPRRLNS…SKKGRGRSGR (79 aa)) form a disordered region. The residue at position 417 (S417) is a Phosphoserine. T420 bears the Phosphothreonine mark. Residue S423 is modified to Phosphoserine. Positions 436–469 (SPGPPEPMEPSLPPLLPSPPSPPPTSTAPLPIRP) are enriched in pro residues. The Nuclear localization signal motif lies at 474-480 (KKSKKGR). Over residues 474 to 485 (KKSKKGRGRSGR) the composition is skewed to basic residues. S476 is modified (phosphoserine; by PKC).

The protein belongs to the protein kinase superfamily. AGC Ser/Thr protein kinase family. S6 kinase subfamily. Post-translationally, phosphorylated and activated by MTOR. Phosphorylation by PKC within the NLS in response to mitogenic stimuli causes cytoplasmic retention.

It is found in the cytoplasm. It localises to the nucleus. It catalyses the reaction L-seryl-[protein] + ATP = O-phospho-L-seryl-[protein] + ADP + H(+). The catalysed reaction is L-threonyl-[protein] + ATP = O-phospho-L-threonyl-[protein] + ADP + H(+). In terms of biological role, phosphorylates specifically ribosomal protein S6. Seems to act downstream of mTOR signaling in response to growth factors and nutrients to promote cell proliferation, cell growth and cell cycle progression in an alternative pathway regulated by MEAK7. The protein is Ribosomal protein S6 kinase beta-2 (Rps6kb2) of Mus musculus (Mouse).